Consider the following 77-residue polypeptide: Acyl carrier protein (77 aa).

The Carrier domain maps to 1-76 (MADFEKVKSI…DVTKFIDNLK (76 aa)). An O-(pantetheine 4'-phosphoryl)serine modification is found at Ser-36.

It belongs to the acyl carrier protein (ACP) family. In terms of processing, 4'-phosphopantetheine is transferred from CoA to a specific serine of apo-ACP by AcpS. This modification is essential for activity because fatty acids are bound in thioester linkage to the sulfhydryl of the prosthetic group.

It is found in the cytoplasm. The protein operates within lipid metabolism; fatty acid biosynthesis. Its function is as follows. Carrier of the growing fatty acid chain in fatty acid biosynthesis. This Leptospira borgpetersenii serovar Hardjo-bovis (strain JB197) protein is Acyl carrier protein.